Here is a 299-residue protein sequence, read N- to C-terminus: Probable lipid kinase YegS (299 aa).

The DAGKc domain occupies 2-133 (ANFPDSLLIL…IDMARVNDKT (132 aa)). ATP contacts are provided by residues T40, 66–72 (GDGTINE), and T95. Mg(2+) contacts are provided by L215, D218, and L220. E271 serves as the catalytic Proton acceptor.

It belongs to the diacylglycerol/lipid kinase family. YegS lipid kinase subfamily. Mg(2+) serves as cofactor. Ca(2+) is required as a cofactor.

The protein localises to the cytoplasm. Its function is as follows. Probably phosphorylates lipids; the in vivo substrate is unknown. The protein is Probable lipid kinase YegS of Salmonella arizonae (strain ATCC BAA-731 / CDC346-86 / RSK2980).